The primary structure comprises 337 residues: MKIAVRGGHNFKAKGALGIIDETIENRKVYKALIKYLNIAGHNVIDVTPGECDVNTDLYLGVQKAEDNNSELFLSIHFDKAYDRYEGALGTGTWIYGRGGKAEIYAKRIVDNLSKGTGLKNRGVKENSKLYELRKTSMPAVLVEVCFCEATEDVRIYREKGPDLIGKLIAEAINEKEIEENIKPEGQEDSLKEKFLKSTNTKAIANLDPRDNPSSIYKDLGEIYKGERIRVLPEICDNKDYLPIIYWKDTTNIESQKVWVSAKQNYLKIDTNATVINVVTELDARYIKSQRSSKMGYVKNGERLYVHKIESGYALGTYFASNGYKTAWFTAKYISLD.

Positions 3 to 174 (IAVRGGHNFK…IGKLIAEAIN (172 aa)) constitute a MurNAc-LAA domain.

To C.perfringens pIP404 ORF10.

This is an uncharacterized protein from Clostridium perfringens (strain 13 / Type A).